Reading from the N-terminus, the 311-residue chain is Aspartate carbamoyltransferase catalytic subunit (311 aa).

The carbamoyl phosphate site is built by Arg58 and Thr59. Lys86 contacts L-aspartate. Positions 108, 136, and 139 each coordinate carbamoyl phosphate. L-aspartate is bound by residues Arg169 and Arg223. Carbamoyl phosphate is bound by residues Gly264 and Pro265.

Belongs to the aspartate/ornithine carbamoyltransferase superfamily. ATCase family. As to quaternary structure, heterododecamer (2C3:3R2) of six catalytic PyrB chains organized as two trimers (C3), and six regulatory PyrI chains organized as three dimers (R2).

It carries out the reaction carbamoyl phosphate + L-aspartate = N-carbamoyl-L-aspartate + phosphate + H(+). Its pathway is pyrimidine metabolism; UMP biosynthesis via de novo pathway; (S)-dihydroorotate from bicarbonate: step 2/3. In terms of biological role, catalyzes the condensation of carbamoyl phosphate and aspartate to form carbamoyl aspartate and inorganic phosphate, the committed step in the de novo pyrimidine nucleotide biosynthesis pathway. The polypeptide is Aspartate carbamoyltransferase catalytic subunit (Acidiphilium cryptum (strain JF-5)).